The sequence spans 1149 residues: MVAATKRRKTHIHKHVKDEAFDDLLKPVYKGKKLTDEINTAQDKWHLLPAFLKVKGLVKQHLDSFNYFVDTDLKKIIKANQLILSDVDPEFYLKYVDIRVGKKSSSSTKDYLTPPHECRLRDMTYSAPIYVDIEYTRGRNIIMHKDVEIGRMPIMLRSNKCILYDADESKMAKLNECPLDPGGYFIVNGTEKVILVQEQLSKNRIIVEADEKKGIVQASVTSSTHERKSKTYVITKNGKIYLKHNSIAEEIPIAIVLKACGILSDLEIMQLVCGNDSSYQDIFAVNLEESSKLDIYTQQQALEYIGAKVKTMRRQKLTILQEGIEAIATTVIAHLTVEALDFREKALYIAMMTRRVVMAMYNPKMIDDRDYVGNKRLELAGQLISLLFEDLFKKFNNDFKLSIDKVLKKPNRAMEYDALLSINVHSNNITSGLNRAISTGNWSLKRFKMERAGVTHVLSRLSYISALGMMTRISSQFEKSRKVSGPRALQPSQFGMLCTADTPEGEACGLVKNLALMTHITTDDEEEPIKKLCYVLGVEDITLIDSASLHLNYGVYLNGTLIGSIRFPTKFVTQFRHLRRTGKVSEFISIYSNSHQMAVHIATDGGRICRPLIIVSDGQSRVKDIHLRKLLDGELDFDDFLKLGLVEYLDVNEENDSYIALYEKDIVPSMTHLEIEPFTILGAVAGLIPYPHHNQSPRNTYQCAMGKQAIGAIAYNQFKRIDTLLYLMTYPQQPMVKTKTIELIDYDKLPAGQNATVAVMSYSGYDIEDALVLNKSSIDRGFGRCETRRKTTTVLKRYANHTQDIIGGMRVDENGDPIWQHQSLGPDGLGEVGMKVQSGQIYINKSVPTNSADAPNPNNVNVQTQYREAPVIYRGPEPSHIDQVMMSVSDNDQALIKVLLRQNRRPELGDKFSSRHGQKGVCGIIVKQEDMPFNDQGIVPDIIMNPHGFPSRMTVGKMIELISGKAGVLNGTLEYGTCFGGSKLEDMSKILVDQGFNYSGKDMLYSGITGECLQAYIFFGPIYYQKLKHMVLDKMHARARGPRAVLTRQPTEGRSRDGGLRLGEMERDCVIAYGASQLLLERLMISSDAFEVDVCDKCGLMGYSGWCTTCKSAENIIKMTIPYAAKLLFQELLSMNIAPRLRLEDIFQQ.

The Zn(2+) site is built by cysteine 1095, cysteine 1098, cysteine 1107, and cysteine 1110. Residues 1095 to 1110 (CDKCGLMGYSGWCTTC) form a C4-type zinc finger.

This sequence belongs to the RNA polymerase beta chain family. In terms of assembly, component of the RNA polymerase III (Pol III) complex consisting of 17 subunits.

Its subcellular location is the nucleus. The catalysed reaction is RNA(n) + a ribonucleoside 5'-triphosphate = RNA(n+1) + diphosphate. In terms of biological role, DNA-dependent RNA polymerase catalyzes the transcription of DNA into RNA using the four ribonucleoside triphosphates as substrates. Second largest core component of RNA polymerase III which synthesizes small RNAs, such as 5S rRNA and tRNAs. Proposed to contribute to the polymerase catalytic activity and forms the polymerase active center together with the largest subunit. Pol III is composed of mobile elements and RPC2 is part of the core element with the central large cleft and probably a clamp element that moves to open and close the cleft. The protein is DNA-directed RNA polymerase III subunit RPC2 (RET1) of Saccharomyces cerevisiae (strain ATCC 204508 / S288c) (Baker's yeast).